The primary structure comprises 535 residues: Succinate-semialdehyde dehydrogenase, mitochondrial (535 aa).

The transit peptide at 1–47 (MATCIWLRSCGARRLGSTFPGCRLRPRAGGLVPASGPAPGPAQLRCY) directs the protein to the mitochondrion. N6-acetyllysine; alternate is present on lysine 126. Lysine 126 bears the N6-succinyllysine; alternate mark. 2 positions are modified to N6-succinyllysine: lysine 135 and lysine 184. NAD(+)-binding positions include arginine 213 and 228–231 (KPAE). Substrate is bound at residue arginine 213. Lysine 265 bears the N6-acetyllysine; alternate mark. The residue at position 265 (lysine 265) is an N6-succinyllysine; alternate. Residue 284 to 289 (GSTTTG) coordinates NAD(+). Catalysis depends on glutamate 306, which acts as the Proton acceptor. Arginine 334 contacts substrate. Residue cysteine 340 is the Nucleophile of the active site. A disulfide bridge connects residues cysteine 340 and cysteine 342. An N6-acetyllysine modification is found at lysine 365. Lysine 402 is modified (N6-succinyllysine). Lysine 411 bears the N6-acetyllysine mark. Serine 498 is a substrate binding site. The residue at position 499 (serine 499) is a Phosphoserine.

Belongs to the aldehyde dehydrogenase family. In terms of assembly, homotetramer.

It localises to the mitochondrion. It carries out the reaction succinate semialdehyde + NAD(+) + H2O = succinate + NADH + 2 H(+). It participates in amino-acid degradation; 4-aminobutanoate degradation. With respect to regulation, redox-regulated. Inhibited under oxydizing conditions. In terms of biological role, catalyzes one step in the degradation of the inhibitory neurotransmitter gamma-aminobutyric acid (GABA). The sequence is that of Succinate-semialdehyde dehydrogenase, mitochondrial (ALDH5A1) from Pan troglodytes (Chimpanzee).